The following is a 418-amino-acid chain: Putative competence-damage inducible protein (418 aa).

Belongs to the CinA family.

The protein is Putative competence-damage inducible protein of Streptococcus pneumoniae (strain CGSP14).